The chain runs to 185 residues: Large ribosomal subunit protein uL5 (185 aa).

Belongs to the universal ribosomal protein uL5 family. Part of the 50S ribosomal subunit; part of the 5S rRNA/L5/L18/L25 subcomplex. Contacts the 5S rRNA and the P site tRNA. Forms a bridge to the 30S subunit in the 70S ribosome.

This is one of the proteins that bind and probably mediate the attachment of the 5S RNA into the large ribosomal subunit, where it forms part of the central protuberance. In the 70S ribosome it contacts protein S13 of the 30S subunit (bridge B1b), connecting the 2 subunits; this bridge is implicated in subunit movement. Contacts the P site tRNA; the 5S rRNA and some of its associated proteins might help stabilize positioning of ribosome-bound tRNAs. The chain is Large ribosomal subunit protein uL5 from Streptomyces griseus subsp. griseus (strain JCM 4626 / CBS 651.72 / NBRC 13350 / KCC S-0626 / ISP 5235).